The primary structure comprises 109 residues: Large ribosomal subunit protein uL22 (109 aa).

This sequence belongs to the universal ribosomal protein uL22 family. As to quaternary structure, part of the 50S ribosomal subunit.

This protein binds specifically to 23S rRNA; its binding is stimulated by other ribosomal proteins, e.g. L4, L17, and L20. It is important during the early stages of 50S assembly. It makes multiple contacts with different domains of the 23S rRNA in the assembled 50S subunit and ribosome. Its function is as follows. The globular domain of the protein is located near the polypeptide exit tunnel on the outside of the subunit, while an extended beta-hairpin is found that lines the wall of the exit tunnel in the center of the 70S ribosome. This chain is Large ribosomal subunit protein uL22, found in Cupriavidus necator (strain ATCC 17699 / DSM 428 / KCTC 22496 / NCIMB 10442 / H16 / Stanier 337) (Ralstonia eutropha).